The chain runs to 135 residues: Small ribosomal subunit protein uS12 (135 aa).

D89 bears the 3-methylthioaspartic acid mark. Residues N108–K135 are disordered. Residues T111–A122 are compositionally biased toward basic residues. Positions K123 to K135 are enriched in basic and acidic residues.

This sequence belongs to the universal ribosomal protein uS12 family. In terms of assembly, part of the 30S ribosomal subunit. Contacts proteins S8 and S17. May interact with IF1 in the 30S initiation complex.

With S4 and S5 plays an important role in translational accuracy. In terms of biological role, interacts with and stabilizes bases of the 16S rRNA that are involved in tRNA selection in the A site and with the mRNA backbone. Located at the interface of the 30S and 50S subunits, it traverses the body of the 30S subunit contacting proteins on the other side and probably holding the rRNA structure together. The combined cluster of proteins S8, S12 and S17 appears to hold together the shoulder and platform of the 30S subunit. The protein is Small ribosomal subunit protein uS12 of Helicobacter pylori (strain HPAG1).